A 205-amino-acid chain; its full sequence is Holliday junction branch migration complex subunit RuvA (205 aa).

Residues 1–64 are domain I; sequence MIGRLRGIIL…EDAQLLFGFI (64 aa). A domain II region spans residues 65-143; sequence HKQERVLFRE…GLSGDLFVPQ (79 aa). Positions 144–156 are flexible linker; it reads GAGEIPAAIDAPA. Residues 157-205 are domain III; the sequence is MPADPEGEAVAALVALGYKPQEASRMVSKVASAGSDCEMLIRDALRAAL.

The protein belongs to the RuvA family. As to quaternary structure, homotetramer. Forms an RuvA(8)-RuvB(12)-Holliday junction (HJ) complex. HJ DNA is sandwiched between 2 RuvA tetramers; dsDNA enters through RuvA and exits via RuvB. An RuvB hexamer assembles on each DNA strand where it exits the tetramer. Each RuvB hexamer is contacted by two RuvA subunits (via domain III) on 2 adjacent RuvB subunits; this complex drives branch migration. In the full resolvosome a probable DNA-RuvA(4)-RuvB(12)-RuvC(2) complex forms which resolves the HJ.

The protein resides in the cytoplasm. The RuvA-RuvB-RuvC complex processes Holliday junction (HJ) DNA during genetic recombination and DNA repair, while the RuvA-RuvB complex plays an important role in the rescue of blocked DNA replication forks via replication fork reversal (RFR). RuvA specifically binds to HJ cruciform DNA, conferring on it an open structure. The RuvB hexamer acts as an ATP-dependent pump, pulling dsDNA into and through the RuvAB complex. HJ branch migration allows RuvC to scan DNA until it finds its consensus sequence, where it cleaves and resolves the cruciform DNA. This Sodalis glossinidius (strain morsitans) protein is Holliday junction branch migration complex subunit RuvA.